Reading from the N-terminus, the 306-residue chain is tRNA dimethylallyltransferase (306 aa).

An ATP-binding site is contributed by 11-18; sequence GPTAVGKS. Residue 13–18 coordinates substrate; that stretch reads TAVGKS. An interaction with substrate tRNA region spans residues 35-38; that stretch reads DSIQ.

This sequence belongs to the IPP transferase family. Monomer. The cofactor is Mg(2+).

It carries out the reaction adenosine(37) in tRNA + dimethylallyl diphosphate = N(6)-dimethylallyladenosine(37) in tRNA + diphosphate. In terms of biological role, catalyzes the transfer of a dimethylallyl group onto the adenine at position 37 in tRNAs that read codons beginning with uridine, leading to the formation of N6-(dimethylallyl)adenosine (i(6)A). In Borreliella burgdorferi (strain ATCC 35210 / DSM 4680 / CIP 102532 / B31) (Borrelia burgdorferi), this protein is tRNA dimethylallyltransferase.